The primary structure comprises 263 residues: Uroplakin-3b-like protein 1 (263 aa).

Positions M1–P33 are cleaved as a signal peptide. Residues G34–V204 lie on the Extracellular side of the membrane. N-linked (GlcNAc...) asparagine glycans are attached at residues N51, N76, and N91. A helical membrane pass occupies residues I205–I225. The Cytoplasmic segment spans residues Y226 to S263.

The protein belongs to the uroplakin-3 family.

It localises to the membrane. This chain is Uroplakin-3b-like protein 1, found in Homo sapiens (Human).